The chain runs to 507 residues: AMSH-like ubiquitin thioesterase 3 (507 aa).

Positions 73–107 (QERLGSRKRLRAVINELESLKPEFNQLVDKLNRVE) form a coiled coil. Disordered stretches follow at residues 133–162 (HKAS…LTSS) and 214–242 (PSNT…LNGD). Polar residues-rich tracts occupy residues 146-162 (LPTS…LTSS), 214-224 (PSNTDWGSADN), and 232-242 (PSSSSASLNGD). The region spanning 333–463 (LHVPVRIMDD…IFHLSDPSGV (131 aa)) is the MPN domain. Zn(2+) contacts are provided by histidine 411, histidine 413, aspartate 424, histidine 426, cysteine 469, histidine 475, and histidine 477. The short motif at 411–424 (HTHPTQTCFMSSVD) is the JAMM motif element.

This sequence belongs to the peptidase M67C family. In terms of assembly, interacts with PATL1 and PATL2. May also bind to HSC70-1, HSC70-3, VHA-A, BGLU23 and EPSIN1. Interacts with BRO1/ALIX. Zn(2+) is required as a cofactor.

The protein resides in the membrane. The protein localises to the cytoplasm. Its subcellular location is the vacuole membrane. It localises to the late endosome. Its function is as follows. Zinc metalloprotease that cleaves 'Lys-48'- and 'Lys-63'-linked polyubiquitin chains, but is not implicated in protein degradation by the 26S proteasome, deneddylation, or desumoylation. Required for intracellular trafficking (e.g. trafficking from the Golgi to the vacuole and the vacuolar trafficking of endocytosed cargo), endocytosis and vacuole biogenesis. This is AMSH-like ubiquitin thioesterase 3 (AMSH3) from Arabidopsis thaliana (Mouse-ear cress).